A 416-amino-acid chain; its full sequence is Phosphoribosylamine--glycine ligase (416 aa).

In terms of domain architecture, ATP-grasp spans K105–Q310. I131–S192 contributes to the ATP binding site. Mg(2+)-binding residues include E281 and N283.

Belongs to the GARS family. Mg(2+) is required as a cofactor. Requires Mn(2+) as cofactor.

The catalysed reaction is 5-phospho-beta-D-ribosylamine + glycine + ATP = N(1)-(5-phospho-beta-D-ribosyl)glycinamide + ADP + phosphate + H(+). Its pathway is purine metabolism; IMP biosynthesis via de novo pathway; N(1)-(5-phospho-D-ribosyl)glycinamide from 5-phospho-alpha-D-ribose 1-diphosphate: step 2/2. The polypeptide is Phosphoribosylamine--glycine ligase (Campylobacter jejuni subsp. jejuni serotype O:2 (strain ATCC 700819 / NCTC 11168)).